The sequence spans 165 residues: Cyclic pyranopterin monophosphate synthase (165 aa).

Substrate contacts are provided by residues leucine 76–histidine 78 and methionine 114–glutamate 115. Aspartate 129 is an active-site residue.

It belongs to the MoaC family. In terms of assembly, homohexamer; trimer of dimers.

It catalyses the reaction (8S)-3',8-cyclo-7,8-dihydroguanosine 5'-triphosphate = cyclic pyranopterin phosphate + diphosphate. Its pathway is cofactor biosynthesis; molybdopterin biosynthesis. Functionally, catalyzes the conversion of (8S)-3',8-cyclo-7,8-dihydroguanosine 5'-triphosphate to cyclic pyranopterin monophosphate (cPMP). This chain is Cyclic pyranopterin monophosphate synthase, found in Brucella abortus (strain 2308).